Here is a 546-residue protein sequence, read N- to C-terminus: Peroxisomal OPC-8:0-CoA ligase 1 (546 aa).

Residues serine 197, serine 198, glycine 199, threonine 200, threonine 201, and lysine 205 each contribute to the ATP site. Lysine 265 lines the CoA pocket. Positions glutamate 267–glutamine 338 are SBD1. ATP is bound by residues glutamine 338, glycine 339, threonine 343, aspartate 424, and arginine 439. The SBD2 stretch occupies residues glycine 339 to tyrosine 403. CoA contacts are provided by lysine 447 and glycine 448. Lysine 530 is a binding site for ATP. A Microbody targeting signal motif is present at residues serine 544–leucine 546.

This sequence belongs to the ATP-dependent AMP-binding enzyme family. Mg(2+) serves as cofactor. Expressed at low levels in seedlings, cotyledons, leaves, hypocotyls and roots.

Its subcellular location is the peroxisome. It catalyses the reaction (9S,13S,15Z)-12-oxophyto-10,15-dienoate + ATP + CoA = (10Z,15Z)-12-oxophytodienoyl-CoA + AMP + diphosphate. The enzyme catalyses (1S,2S)-OPC-8 + ATP + CoA = OPC8-CoA + AMP + diphosphate. It carries out the reaction hexadecanoate + ATP + CoA = hexadecanoyl-CoA + AMP + diphosphate. The catalysed reaction is (9Z)-octadecenoate + ATP + CoA = (9Z)-octadecenoyl-CoA + AMP + diphosphate. It catalyses the reaction tetradecanoate + ATP + CoA = tetradecanoyl-CoA + AMP + diphosphate. The enzyme catalyses decanoate + ATP + CoA = decanoyl-CoA + AMP + diphosphate. It carries out the reaction dodecanoate + ATP + CoA = dodecanoyl-CoA + AMP + diphosphate. The catalysed reaction is octadecanoate + ATP + CoA = octadecanoyl-CoA + AMP + diphosphate. It catalyses the reaction OPC-6 + ATP + CoA = OPC-6-CoA + AMP + diphosphate. The enzyme catalyses dinor-OPDA + ATP + CoA = dinor-OPDA-CoA + AMP + diphosphate. Contributes to jasmonic acid biosynthesis by initiating the beta-oxidative chain shortening of its precursors. Converts 12-oxo-phytodienoic acid (OPDA) and 3-oxo-2-(2'-pentenyl)-cyclopentane-1-octanoic acid (OPC-8:0) into OPDA-CoA and OPC-8:0-CoA, respectively. Follows a two-step reaction mechanism, wherein the carboxylate substrate first undergoes adenylation by ATP, followed by a thioesterification in the presence of CoA to yield the final CoA thioester. The protein is Peroxisomal OPC-8:0-CoA ligase 1 of Arabidopsis thaliana (Mouse-ear cress).